Consider the following 392-residue polypeptide: Formate-dependent phosphoribosylglycinamide formyltransferase (392 aa).

Residues 22–23 and Glu-82 each bind N(1)-(5-phospho-beta-D-ribosyl)glycinamide; that span reads EL. ATP-binding positions include Arg-114, Lys-155, 160–165, 195–198, and Glu-203; these read SSGKGQ and EGVV. In terms of domain architecture, ATP-grasp spans 119 to 308; the sequence is RLAAEELQLP…EFALHVRAFL (190 aa). Positions 267 and 279 each coordinate Mg(2+). N(1)-(5-phospho-beta-D-ribosyl)glycinamide is bound by residues Asp-286, Lys-355, and 362-363; that span reads RR.

This sequence belongs to the PurK/PurT family. As to quaternary structure, homodimer.

The catalysed reaction is N(1)-(5-phospho-beta-D-ribosyl)glycinamide + formate + ATP = N(2)-formyl-N(1)-(5-phospho-beta-D-ribosyl)glycinamide + ADP + phosphate + H(+). Its pathway is purine metabolism; IMP biosynthesis via de novo pathway; N(2)-formyl-N(1)-(5-phospho-D-ribosyl)glycinamide from N(1)-(5-phospho-D-ribosyl)glycinamide (formate route): step 1/1. In terms of biological role, involved in the de novo purine biosynthesis. Catalyzes the transfer of formate to 5-phospho-ribosyl-glycinamide (GAR), producing 5-phospho-ribosyl-N-formylglycinamide (FGAR). Formate is provided by PurU via hydrolysis of 10-formyl-tetrahydrofolate. The chain is Formate-dependent phosphoribosylglycinamide formyltransferase from Shigella dysenteriae serotype 1 (strain Sd197).